The primary structure comprises 510 residues: Chromosomal replication initiator protein DnaA (510 aa).

A domain I, interacts with DnaA modulators region spans residues 1–87 (MSVELWQQCV…IGSRRSSAPR (87 aa)). The domain II stretch occupies residues 87 to 173 (RAAPNAPVSA…QVEGALKHTS (87 aa)). The disordered stretch occupies residues 140-160 (DSFDAMAEPASAPASSGRAEQ). Residues 144–157 (AMAEPASAPASSGR) are compositionally biased toward low complexity. The domain III, AAA+ region stretch occupies residues 174–390 (YLNRTFTFDT…GALKRVIAHS (217 aa)). ATP contacts are provided by Gly-218, Gly-220, Lys-221, and Thr-222. A domain IV, binds dsDNA region spans residues 391-510 (HFMGRDITIE…YKNLLRTLTT (120 aa)).

It belongs to the DnaA family. As to quaternary structure, oligomerizes as a right-handed, spiral filament on DNA at oriC.

The protein localises to the cytoplasm. In terms of biological role, plays an essential role in the initiation and regulation of chromosomal replication. ATP-DnaA binds to the origin of replication (oriC) to initiate formation of the DNA replication initiation complex once per cell cycle. Binds the DnaA box (a 9 base pair repeat at the origin) and separates the double-stranded (ds)DNA. Forms a right-handed helical filament on oriC DNA; dsDNA binds to the exterior of the filament while single-stranded (ss)DNA is stabiized in the filament's interior. The ATP-DnaA-oriC complex binds and stabilizes one strand of the AT-rich DNA unwinding element (DUE), permitting loading of DNA polymerase. After initiation quickly degrades to an ADP-DnaA complex that is not apt for DNA replication. Binds acidic phospholipids. This chain is Chromosomal replication initiator protein DnaA, found in Pseudomonas putida (strain GB-1).